We begin with the raw amino-acid sequence, 106 residues long: Probable insulin-like peptide beta-type 1 (106 aa).

The N-terminal stretch at 1-19 (MFSFFTYFLLSALLLSASC) is a signal peptide. The propeptide at 20-51 (RQPSMDTSKADRILREIEMETELENQLSRARR) is removed; by convertase egl-3. Intrachain disulfides connect C60/C89, C72/C102, C76/C103, and C88/C93.

The protein belongs to the insulin family. Expressed by ASI and ASJ sensory neurons and weakly by ventral cord motor neurons.

The protein resides in the secreted. Its function is as follows. Probable insulin-like peptide which negatively regulates synapse development at the neuromuscular junctions. Probably acts as a daf-2/InsR agonist ligand to prevent dauer formation under optimal environmental conditions. This Caenorhabditis elegans protein is Probable insulin-like peptide beta-type 1 (ins-4).